A 119-amino-acid chain; its full sequence is Ribonuclease P protein component (119 aa).

The protein belongs to the RnpA family. As to quaternary structure, consists of a catalytic RNA component (M1 or rnpB) and a protein subunit.

It catalyses the reaction Endonucleolytic cleavage of RNA, removing 5'-extranucleotides from tRNA precursor.. In terms of biological role, RNaseP catalyzes the removal of the 5'-leader sequence from pre-tRNA to produce the mature 5'-terminus. It can also cleave other RNA substrates such as 4.5S RNA. The protein component plays an auxiliary but essential role in vivo by binding to the 5'-leader sequence and broadening the substrate specificity of the ribozyme. The polypeptide is Ribonuclease P protein component (Corynebacterium diphtheriae (strain ATCC 700971 / NCTC 13129 / Biotype gravis)).